We begin with the raw amino-acid sequence, 408 residues long: Putative transporter AmpG 2 (408 aa).

12 consecutive transmembrane segments (helical) span residues 10–30, 49–69, 84–104, 109–129, 154–174, 177–197, 224–244, 261–281, 294–311, 315–337, 353–373, and 378–398; these read YISNIFFILIISFPGGLIYLL, IGLFSLVNFIHIFKFLWGPLL, YCLIIALVSCICCVYILTNFN, FIPFALCLVAVAFFSSIYDML, FRIGILIAGSGALYLSTIISW, VYRSMAILCIPSLLLIIIYPL, WLIIVSFMLLYRLQDNFLSIM, LGYKAFGMCAAILGGFIGGFL, ALIYHALSSLSFLFLYFY, ITSLYIAVFFQEFTKGLTMSPFF, IALITSIAYISTILFGSISGY, and LGWTYFFLVAGFCFIPAYILI.

Belongs to the major facilitator superfamily.

It localises to the cell inner membrane. The protein is Putative transporter AmpG 2 (ampG2) of Rickettsia felis (strain ATCC VR-1525 / URRWXCal2) (Rickettsia azadi).